The primary structure comprises 30 residues: Chassatide C9 (30 aa).

A cross-link (cyclopeptide (Gly-Asn)) is located at residues 1-30 (GIPCGESCVFIPCVTTVIGCSCKDKVCYNN). 3 disulfide bridges follow: C4-C20, C8-C22, and C13-C27.

Post-translationally, this is a cyclic peptide.

Functionally, probably participates in a plant defense mechanism. In Chassalia chartacea (Chassalia curviflora), this protein is Chassatide C9.